Here is a 245-residue protein sequence, read N- to C-terminus: Orotidine 5'-phosphate decarboxylase (245 aa).

Substrate is bound by residues Asp-22, Lys-44, Asp-71–Thr-80, Thr-131, Arg-192, Gln-201, Gly-221, and Arg-222. Residue Lys-73 is the Proton donor of the active site.

The protein belongs to the OMP decarboxylase family. Type 1 subfamily. As to quaternary structure, homodimer.

The enzyme catalyses orotidine 5'-phosphate + H(+) = UMP + CO2. It participates in pyrimidine metabolism; UMP biosynthesis via de novo pathway; UMP from orotate: step 2/2. Functionally, catalyzes the decarboxylation of orotidine 5'-monophosphate (OMP) to uridine 5'-monophosphate (UMP). In Salmonella gallinarum (strain 287/91 / NCTC 13346), this protein is Orotidine 5'-phosphate decarboxylase.